Here is a 320-residue protein sequence, read N- to C-terminus: Aspartate carbamoyltransferase catalytic subunit (320 aa).

Positions 70 and 71 each coordinate carbamoyl phosphate. K98 lines the L-aspartate pocket. 3 residues coordinate carbamoyl phosphate: R120, H149, and Q152. Positions 182 and 237 each coordinate L-aspartate. The carbamoyl phosphate site is built by G278 and P279.

The protein belongs to the aspartate/ornithine carbamoyltransferase superfamily. ATCase family. As to quaternary structure, heterododecamer (2C3:3R2) of six catalytic PyrB chains organized as two trimers (C3), and six regulatory PyrI chains organized as three dimers (R2).

It catalyses the reaction carbamoyl phosphate + L-aspartate = N-carbamoyl-L-aspartate + phosphate + H(+). Its pathway is pyrimidine metabolism; UMP biosynthesis via de novo pathway; (S)-dihydroorotate from bicarbonate: step 2/3. Functionally, catalyzes the condensation of carbamoyl phosphate and aspartate to form carbamoyl aspartate and inorganic phosphate, the committed step in the de novo pyrimidine nucleotide biosynthesis pathway. This chain is Aspartate carbamoyltransferase catalytic subunit, found in Ruthia magnifica subsp. Calyptogena magnifica.